We begin with the raw amino-acid sequence, 112 residues long: Type III inner-rod protein PscI (112 aa).

The protein belongs to the YscI/HrpB family. As to quaternary structure, homomultimer (through its C-terminal region).

Functionally, component of the type III secretion (T3S) injectisome that translocates effector toxins into host cells, facilitating the establishment and dissemination of infection. Polymerizes into flexible and regularly twisted fibrils and plays an essential role in needle assembly. The chain is Type III inner-rod protein PscI (pscI) from Pseudomonas aeruginosa (strain ATCC 15692 / DSM 22644 / CIP 104116 / JCM 14847 / LMG 12228 / 1C / PRS 101 / PAO1).